The chain runs to 1566 residues: Arginine-glutamic acid dipeptide repeats protein (1566 aa).

Basic and acidic residues predominate over residues Met1 to Arg36. The segment at Met1–Asp90 is disordered. Phosphoserine occurs at positions 53 and 56. Positions Lys74–Arg85 are enriched in basic residues. In terms of domain architecture, BAH spans Val103 to Gln283. Thr120 is subject to Phosphothreonine. Phosphoserine occurs at positions 142 and 304. Positions Gly284–Pro387 constitute an ELM2 domain. The 53-residue stretch at Leu391 to Glu443 folds into the SANT domain. The tract at residues Thr464 to Ser495 is disordered. Residues Arg465–Pro474 show a composition bias toward polar residues. Over residues Ser479 to Ala488 the composition is skewed to low complexity. The GATA-type zinc-finger motif lies at Cys507 to Cys532. Positions Leu542–Phe1133 are disordered. A Glycyl lysine isopeptide (Lys-Gly) (interchain with G-Cter in SUMO2) cross-link involves residue Lys560. Phosphoserine occurs at positions 594, 600, and 613. Over residues Ser609–Asp623 the composition is skewed to low complexity. Residues Ser624–Ala640 show a composition bias toward basic and acidic residues. Residue Lys637 forms a Glycyl lysine isopeptide (Lys-Gly) (interchain with G-Cter in SUMO2) linkage. Phosphoserine occurs at positions 642, 656, 675, and 679. Residues Glu652–Glu673 show a composition bias toward basic and acidic residues. Positions Ser688 to Asn708 are enriched in basic and acidic residues. Positions Arg709 to Asp720 are enriched in polar residues. Low complexity predominate over residues Asp726–Pro751. Over residues Ser752 to Thr767 the composition is skewed to pro residues. The span at Ser778–Pro796 shows a compositional bias: low complexity. Over residues Gln809–Gln827 the composition is skewed to pro residues. Residues Leu829–Ser840 are compositionally biased toward polar residues. 2 stretches are compositionally biased toward low complexity: residues Gln843–His865 and Ser897–Pro913. A compositionally biased stretch (pro residues) spans Arg914 to Pro940. The span at Lys970–Pro980 shows a compositional bias: low complexity. The span at Pro1030–Cys1052 shows a compositional bias: pro residues. Low complexity predominate over residues Pro1053–Ser1085. Ser1106, Ser1113, and Ser1115 each carry phosphoserine. Over residues Ser1106–Glu1117 the composition is skewed to pro residues. Thr1119 bears the Phosphothreonine mark. Positions Gly1156 to Ser1211 form a coiled coil. Lys1158 is subject to N6-acetyllysine. Residues Lys1162–Ala1206 are compositionally biased toward basic and acidic residues. Positions Lys1162 to Ile1246 are disordered. Tyr1259 carries the phosphotyrosine modification. At Ser1266 the chain carries Phosphoserine.

Interacts with HDAC1. Interacts with ATN1. Interaction with ATN1 is improved when the poly-Gln region of ATN1 is extended. Interacts with FAT1. In terms of tissue distribution, widely expressed. Expressed in tumor cell lines.

The protein resides in the nucleus. Functionally, plays a role as a transcriptional repressor during development. May play a role in the control of cell survival. Overexpression of RERE recruits BAX to the nucleus particularly to POD and triggers caspase-3 activation, leading to cell death. This chain is Arginine-glutamic acid dipeptide repeats protein (RERE), found in Homo sapiens (Human).